The primary structure comprises 214 residues: MIDPLHTAPPLLAARALAFSRNEEPVFGPLDFHVDAGEALLVQGDNGAGKTTLLRVLAGLLHVERGEILIDGKTARRGDRSRFMAYLGHLPGLKADLSTLENLHFLCGLHGRRAKQMPGSALAIVGLAGYEDALVRQLSAGQRKRLALARLWLSPAPLWLLDEPYANLDLEGITLVNRMISAHLRGGGAALVTTHGAYAAPPVRTRMLTLEAAA.

One can recognise an ABC transporter domain in the interval 12-214 (LAARALAFSR…TRMLTLEAAA (203 aa)). 44-51 (GDNGAGKT) provides a ligand contact to ATP.

Belongs to the ABC transporter superfamily. CcmA exporter (TC 3.A.1.107) family. In terms of assembly, the complex is composed of two ATP-binding proteins (CcmA) and two transmembrane proteins (CcmB).

It is found in the cell inner membrane. It carries out the reaction heme b(in) + ATP + H2O = heme b(out) + ADP + phosphate + H(+). Functionally, part of the ABC transporter complex CcmAB involved in the biogenesis of c-type cytochromes; once thought to export heme, this seems not to be the case, but its exact role is uncertain. Responsible for energy coupling to the transport system. The chain is Cytochrome c biogenesis ATP-binding export protein CcmA from Xanthomonas campestris pv. campestris (strain 8004).